The chain runs to 1261 residues: Mediator of RNA polymerase II transcription subunit 14 (1261 aa).

The segment covering M1–T11 has biased composition (basic and acidic residues). Disordered regions lie at residues M1 to H21, N413 to E435, and D1193 to T1220. The span at I417–D427 shows a compositional bias: acidic residues. Over residues Q1205–T1220 the composition is skewed to basic and acidic residues.

This sequence belongs to the Mediator complex subunit 14 family. As to quaternary structure, component of the Mediator complex.

It is found in the nucleus. Functionally, component of the Mediator complex, a coactivator involved in the regulated transcription of nearly all RNA polymerase II-dependent genes. Mediator functions as a bridge to convey information from gene-specific regulatory proteins to the basal RNA polymerase II transcription machinery. Mediator is recruited to promoters by direct interactions with regulatory proteins and serves as a scaffold for the assembly of a functional preinitiation complex with RNA polymerase II and the general transcription factors. The chain is Mediator of RNA polymerase II transcription subunit 14 (MED14) from Candida albicans (strain SC5314 / ATCC MYA-2876) (Yeast).